Here is a 293-residue protein sequence, read N- to C-terminus: tRNA pseudouridine synthase B (293 aa).

D39 (nucleophile) is an active-site residue.

It belongs to the pseudouridine synthase TruB family. Type 1 subfamily.

It carries out the reaction uridine(55) in tRNA = pseudouridine(55) in tRNA. Functionally, responsible for synthesis of pseudouridine from uracil-55 in the psi GC loop of transfer RNAs. This is tRNA pseudouridine synthase B from Rickettsia bellii (strain RML369-C).